Consider the following 200-residue polypeptide: Small ribosomal subunit protein uS2 (200 aa).

The protein belongs to the universal ribosomal protein uS2 family.

This is Small ribosomal subunit protein uS2 from Picrophilus torridus (strain ATCC 700027 / DSM 9790 / JCM 10055 / NBRC 100828 / KAW 2/3).